A 323-amino-acid chain; its full sequence is E3 ubiquitin-protein ligase SIRP1 (323 aa).

The RING-type; atypical zinc-finger motif lies at 199–240 (CSVCLDDLEVGSQAKQMPCEHKFHSSCILPWLELHSSCPVCR). Disordered stretches follow at residues 248-280 (TKDLNEPSNIGRVEDSHEEVRADGPGNVSESSN) and 296-323 (REAQNAGGVSTDQQSPHTSGTNPNAGHS). Residues 259 to 269 (RVEDSHEEVRA) show a composition bias toward basic and acidic residues.

The protein resides in the cytoplasm. The enzyme catalyses S-ubiquitinyl-[E2 ubiquitin-conjugating enzyme]-L-cysteine + [acceptor protein]-L-lysine = [E2 ubiquitin-conjugating enzyme]-L-cysteine + N(6)-ubiquitinyl-[acceptor protein]-L-lysine.. It functions in the pathway protein modification; protein ubiquitination. Possesses E3 ubiqutin-protein ligase activity in vitro. Acts as negative regulator of salinity stress tolerance mediated by the ubiquitin-proteasome degradation pathway. The polypeptide is E3 ubiquitin-protein ligase SIRP1 (Oryza sativa subsp. japonica (Rice)).